Reading from the N-terminus, the 346-residue chain is Phosphate acyltransferase (346 aa).

This sequence belongs to the PlsX family. Homodimer. Probably interacts with PlsY.

It localises to the cytoplasm. The enzyme catalyses a fatty acyl-[ACP] + phosphate = an acyl phosphate + holo-[ACP]. It functions in the pathway lipid metabolism; phospholipid metabolism. Catalyzes the reversible formation of acyl-phosphate (acyl-PO(4)) from acyl-[acyl-carrier-protein] (acyl-ACP). This enzyme utilizes acyl-ACP as fatty acyl donor, but not acyl-CoA. This chain is Phosphate acyltransferase, found in Brucella abortus (strain S19).